The primary structure comprises 776 residues: Endonuclease MutS2 (776 aa).

330–337 (GPNTGGKT) contributes to the ATP binding site. The Smr domain maps to 701-776 (LDLRGMRYEE…GSGATIAILK (76 aa)).

This sequence belongs to the DNA mismatch repair MutS family. MutS2 subfamily. Homodimer. Binds to stalled ribosomes, contacting rRNA.

Its function is as follows. Endonuclease that is involved in the suppression of homologous recombination and thus may have a key role in the control of bacterial genetic diversity. Functionally, acts as a ribosome collision sensor, splitting the ribosome into its 2 subunits. Detects stalled/collided 70S ribosomes which it binds and splits by an ATP-hydrolysis driven conformational change. Acts upstream of the ribosome quality control system (RQC), a ribosome-associated complex that mediates the extraction of incompletely synthesized nascent chains from stalled ribosomes and their subsequent degradation. Probably generates substrates for RQC. The chain is Endonuclease MutS2 from Lactococcus lactis subsp. cremoris (strain SK11).